A 343-amino-acid polypeptide reads, in one-letter code: MKPPRLTDTTLRDGSHPMRHQFTRQQVATIVQALDRAGVPVIEVSHGDGLAGSSLQYGFSHTSEFDLIETARQHAERAKIAALMLPGIGTRQELKEAVARGVQVVRIATQCTEADISEQHFGLAKELGLETVGFLMMAHMRPPEELARQAKLMESYGADCVYIVDSAGAMLPQDAAARVQALKDTLSVQVGFHAHNNLGLGIANTLAALEAGADQIDGCLRGLGAGAGNAATELLAAVLDRLGLNPGLDVFSLMDAAEYVVAPIMPFQPFPDRDAITIGYAGVYSTFLLHAKRAGAQYNVDPREILVELGRRQAVAGQEDWIIDVALELSRRHQSSARKESRP.

In terms of domain architecture, Pyruvate carboxyltransferase spans 4 to 254; the sequence is PRLTDTTLRD…NPGLDVFSLM (251 aa). Position 12 to 13 (12 to 13) interacts with substrate; the sequence is RD. Residue D13 participates in Mn(2+) binding. H16 serves as the catalytic Proton acceptor. S166 and H193 together coordinate substrate. Mn(2+)-binding residues include H193 and H195. Y284 contributes to the substrate binding site.

The protein belongs to the 4-hydroxy-2-oxovalerate aldolase family.

It carries out the reaction (S)-4-hydroxy-2-oxopentanoate = acetaldehyde + pyruvate. The chain is 4-hydroxy-2-oxovalerate aldolase from Chloroflexus aurantiacus (strain ATCC 29364 / DSM 637 / Y-400-fl).